Reading from the N-terminus, the 819-residue chain is Leucine--tRNA ligase (819 aa).

The 'HIGH' region motif lies at 40-51 (PYPSGAGLHVGH). The 'KMSKS' region motif lies at 600–604 (KMSKS). An ATP-binding site is contributed by Lys603.

The protein belongs to the class-I aminoacyl-tRNA synthetase family.

It localises to the cytoplasm. The enzyme catalyses tRNA(Leu) + L-leucine + ATP = L-leucyl-tRNA(Leu) + AMP + diphosphate. The chain is Leucine--tRNA ligase from Chlamydia trachomatis serovar D (strain ATCC VR-885 / DSM 19411 / UW-3/Cx).